The chain runs to 693 residues: ATP-dependent DNA helicase RecG (693 aa).

The tract at residues 48 to 146 (THLYPIGELL…GDLSTPELQE (99 aa)) is wedge domain. One can recognise a Helicase ATP-binding domain in the interval 283–448 (DMALDVPMMR…AYADLDTSVI (166 aa)). An ATP-binding site is contributed by 296–303 (GDVGSGKT). The short motif at 397–400 (DEQH) is the DEAH box element. The 147-residue stretch at 482 to 628 (EGRQAYWVCT…GFVIAQKDLE (147 aa)) folds into the Helicase C-terminal domain.

This sequence belongs to the helicase family. RecG subfamily. In terms of assembly, monomer in solution. Probably a monomer on HJ DNA. Binding to fork DNA is facilitated by SSB; the proteins do not seem to stably associate. Mg(2+) is required as a cofactor.

The catalysed reaction is Couples ATP hydrolysis with the unwinding of duplex DNA by translocating in the 3'-5' direction.. It catalyses the reaction ATP + H2O = ADP + phosphate + H(+). Functionally, plays a critical role in recombination and DNA repair. Helps process Holliday junction (HJ) intermediates to mature products by catalyzing branch migration. Has replication fork regression activity, unwinds stalled or blocked replication forks to make a HJ that can be resolved by RuvC or RusA. Also rewinds unwound dsDNA in an ATP-dependent manner. Has double-stranded (ds)DNA unwinding activity characteristic of a DNA helicase with 3'-5' polarity in vitro on linear dsDNA; branched duplex DNA (Y-DNA) substrates adopt different conformations that influence which of the two arms are unwound. Binds and unwinds HJ and Y-DNA but not linear duplex DNA; binds no more than 10 nucleotides of ssDNA at a fork. Has a role in constitutive stable DNA replication (cSDR, DNA replication in the absence of protein synthesis) and R-loop (RNA annealed with dsDNA) formation. Unwinds R-loops but not RNA:DNA hybrids. Is genetically synergistic to RadA and RuvABC. This is ATP-dependent DNA helicase RecG from Escherichia coli (strain K12).